Here is a 461-residue protein sequence, read N- to C-terminus: Cysteine--tRNA ligase (461 aa).

Residue Cys30 participates in Zn(2+) binding. Positions 32–42 (VTVYDLCHIGH) match the 'HIGH' region motif. The Zn(2+) site is built by Cys211, His236, and Glu240. The short motif at 268–272 (KMSKS) is the 'KMSKS' region element. Residue Lys271 coordinates ATP.

Belongs to the class-I aminoacyl-tRNA synthetase family. In terms of assembly, monomer. It depends on Zn(2+) as a cofactor.

The protein resides in the cytoplasm. The catalysed reaction is tRNA(Cys) + L-cysteine + ATP = L-cysteinyl-tRNA(Cys) + AMP + diphosphate. The sequence is that of Cysteine--tRNA ligase from Shewanella sp. (strain ANA-3).